We begin with the raw amino-acid sequence, 176 residues long: MTMCSGARLALLVYGIIMHSSVYCSPAAAGLRFPGIRPEDEAYDEDGNPLQDFYDSDPPGVGGPASTLRDAYALYYPAEERDVAHGILNKAYRKVLDQLSARKYLQTLMAKSVGGNLDGGAEDDSEPLSKRHSDGIFTDSYSRYRKQMAVKKYLAAVLGKRYKQRVKNKGRRIAYL.

Positions 1–24 are cleaved as a signal peptide; the sequence is MTMCSGARLALLVYGIIMHSSVYC. Positions 25–80 are excised as a propeptide; it reads SPAAAGLRFPGIRPEDEAYDEDGNPLQDFYDSDPPGVGGPASTLRDAYALYYPAEE. Positions 150-158 are important for receptor binding; it reads VKKYLAAVL. Leucine 158 bears the Leucine amide mark. At lysine 169 the chain carries Lysine amide. The propeptide occupies 173–176; that stretch reads IAYL.

It belongs to the glucagon family.

The protein resides in the secreted. Functionally, PACAP is a neuropeptide involved in diverse array of physiological processes through activating the PACAP subfamily of class B1 G protein-coupled receptors: VIP receptor 1 (VIPR1), VIP receptor 2 (VIPR2), and PACAP type I receptor (ADCYAP1R1). Exerts neuroprotective and general cytoprotective effects due to anti-apoptotic, anti-inflammatory, and antioxidant actions. Promotes neuron projection development through the RAPGEF2/Rap1/B-Raf/ERK pathway. In chromaffin cells, induces long-lasting increase of intracellular calcium concentrations and neuroendocrine secretion. Involved in the control of glucose homeostasis, induces insulin secretion by pancreatic beta cells. PACAP exists in two bioactive forms from proteolysis of the same precursor protein, PACAP27 and PACAP38, which differ by eleven amino acid residues in the C-terminus. This chain is Pituitary adenylate cyclase-activating polypeptide (ADCYAP1), found in Sus scrofa (Pig).